The chain runs to 601 residues: Probable HECT-type ubiquitin ligase-interacting protein creD (601 aa).

Disordered stretches follow at residues 374–397 and 454–496; these read EVDPSGYRTPGPGSGPGTPFGTLS and VSTD…GMAT. The segment covering 455 to 473 has biased composition (low complexity); the sequence is STDSFGPSSGSNSQSPASP. Residues 475-489 show a composition bias toward basic and acidic residues; it reads LSRRPSDEGYHDHDY.

It belongs to the arrestin family. In terms of assembly, interacts with hulA.

Component of the regulatory network controlling carbon source utilization through ubiquitination and deubiquitination involving creA, creB, creC, creD and acrB. May be involved in signaling by recognizing appropriately phosphorylated substrates via its arrestin domains and then recruit a HECT-type ubiquitin ligase such as hulA, leading to ubiquitination of the substrate, providing a link between ubiquitination and phosphorylation in protein regulation and stability. The sequence is that of Probable HECT-type ubiquitin ligase-interacting protein creD (creD) from Aspergillus fumigatus (strain CBS 144.89 / FGSC A1163 / CEA10) (Neosartorya fumigata).